A 353-amino-acid chain; its full sequence is 3-dehydroquinate synthase (353 aa).

NAD(+) is bound by residues 61–66 (DGEEAK), 119–120 (TT), Lys-132, and Lys-141. 3 residues coordinate Zn(2+): Glu-174, His-238, and His-254.

The protein belongs to the sugar phosphate cyclases superfamily. Dehydroquinate synthase family. Requires Co(2+) as cofactor. Zn(2+) serves as cofactor. The cofactor is NAD(+).

It localises to the cytoplasm. The enzyme catalyses 7-phospho-2-dehydro-3-deoxy-D-arabino-heptonate = 3-dehydroquinate + phosphate. It participates in metabolic intermediate biosynthesis; chorismate biosynthesis; chorismate from D-erythrose 4-phosphate and phosphoenolpyruvate: step 2/7. Its function is as follows. Catalyzes the conversion of 3-deoxy-D-arabino-heptulosonate 7-phosphate (DAHP) to dehydroquinate (DHQ). The chain is 3-dehydroquinate synthase from Sulfolobus acidocaldarius (strain ATCC 33909 / DSM 639 / JCM 8929 / NBRC 15157 / NCIMB 11770).